Reading from the N-terminus, the 138-residue chain is Basic phospholipase A2 chain HDP-1P (138 aa).

An N-terminal signal peptide occupies residues 1-16; the sequence is MRILWIVAVCLIGVEG. Disulfide bonds link Cys-42–Cys-131, Cys-44–Cys-60, Cys-59–Cys-111, Cys-65–Cys-138, Cys-66–Cys-104, Cys-73–Cys-97, and Cys-91–Cys-102. Residues Tyr-43, Gly-45, and Gly-47 each coordinate Ca(2+). Residue His-63 is part of the active site. Asp-64 is a Ca(2+) binding site. Residue Asp-105 is part of the active site.

As to quaternary structure, heterodimer; non-covalently linked. The toxic basic protein has phospholipase A2 activity (chain HDP-1P) and the non-toxic acidic protein functions as its inhibitor (chain HPD-1I (AC A4VBF0)). The cofactor is Ca(2+). As to expression, expressed by the venom gland.

Its subcellular location is the secreted. It carries out the reaction a 1,2-diacyl-sn-glycero-3-phosphocholine + H2O = a 1-acyl-sn-glycero-3-phosphocholine + a fatty acid + H(+). Its activity is regulated as follows. Enzymatic activity and neurotoxicity are inhibited by Triton X-100, which has been determined to be located in the center of the hydrophobic channel of the enzyme. Functionally, heterodimer: shows the same activities as the monomer, but with a lower potency. In terms of biological role, monomer: snake venom phospholipase A2 (PLA2) that shows presynaptic neurotoxicity, anticoagulant activity and that weakly inhibits ADP-induced platelet aggregation. Inhibits exocytosis in pancreatic beta cells, confirming it can act presynaptically in inhibiting the exocytosis of neurotransmitters in neurons. PLA2 catalyzes the calcium-dependent hydrolysis of the 2-acyl groups in 3-sn-phosphoglycerides. The polypeptide is Basic phospholipase A2 chain HDP-1P (Vipera nikolskii (Nikolsky's adder)).